Consider the following 156-residue polypeptide: Small ribosomal subunit protein uS7 (156 aa).

The protein belongs to the universal ribosomal protein uS7 family. As to quaternary structure, part of the 30S ribosomal subunit. Contacts proteins S9 and S11.

In terms of biological role, one of the primary rRNA binding proteins, it binds directly to 16S rRNA where it nucleates assembly of the head domain of the 30S subunit. Is located at the subunit interface close to the decoding center, probably blocks exit of the E-site tRNA. In Rhizobium meliloti (strain 1021) (Ensifer meliloti), this protein is Small ribosomal subunit protein uS7.